Consider the following 353-residue polypeptide: Photosystem II protein D1 (353 aa).

Threonine 2 carries the post-translational modification N-acetylthreonine. A Phosphothreonine modification is found at threonine 2. A run of 3 helical transmembrane segments spans residues 29 to 46 (YIGW…TATS), 118 to 133 (HFLL…EWEL), and 142 to 156 (WIAV…AATA). Histidine 118 serves as a coordination point for chlorophyll a. Residue tyrosine 126 participates in pheophytin a binding. 2 residues coordinate [CaMn4O5] cluster: aspartate 170 and glutamate 189. A helical transmembrane segment spans residues 197 to 218 (FHMLGVAGVFGGSLFSAMHGSL). Residue histidine 198 coordinates chlorophyll a. Residues histidine 215 and 264-265 (SF) each bind a quinone. Residue histidine 215 participates in Fe cation binding. Histidine 272 is a binding site for Fe cation. A helical membrane pass occupies residues 274 to 288 (FLAAWPVVGIWFTAL). [CaMn4O5] cluster-binding residues include histidine 332, glutamate 333, aspartate 342, and alanine 344. Positions 345–353 (AVEVPSTNG) are excised as a propeptide.

It belongs to the reaction center PufL/M/PsbA/D family. PSII is composed of 1 copy each of membrane proteins PsbA, PsbB, PsbC, PsbD, PsbE, PsbF, PsbH, PsbI, PsbJ, PsbK, PsbL, PsbM, PsbT, PsbX, PsbY, PsbZ, Psb30/Ycf12, at least 3 peripheral proteins of the oxygen-evolving complex and a large number of cofactors. It forms dimeric complexes. The D1/D2 heterodimer binds P680, chlorophylls that are the primary electron donor of PSII, and subsequent electron acceptors. It shares a non-heme iron and each subunit binds pheophytin, quinone, additional chlorophylls, carotenoids and lipids. D1 provides most of the ligands for the Mn4-Ca-O5 cluster of the oxygen-evolving complex (OEC). There is also a Cl(-1) ion associated with D1 and D2, which is required for oxygen evolution. The PSII complex binds additional chlorophylls, carotenoids and specific lipids. serves as cofactor. In terms of processing, tyr-161 forms a radical intermediate that is referred to as redox-active TyrZ, YZ or Y-Z. Post-translationally, C-terminally processed by CTPA; processing is essential to allow assembly of the oxygen-evolving complex and thus photosynthetic growth.

The protein localises to the plastid. The protein resides in the chloroplast thylakoid membrane. It carries out the reaction 2 a plastoquinone + 4 hnu + 2 H2O = 2 a plastoquinol + O2. Photosystem II (PSII) is a light-driven water:plastoquinone oxidoreductase that uses light energy to abstract electrons from H(2)O, generating O(2) and a proton gradient subsequently used for ATP formation. It consists of a core antenna complex that captures photons, and an electron transfer chain that converts photonic excitation into a charge separation. The D1/D2 (PsbA/PsbD) reaction center heterodimer binds P680, the primary electron donor of PSII as well as several subsequent electron acceptors. The polypeptide is Photosystem II protein D1 (Eucalyptus globulus subsp. globulus (Tasmanian blue gum)).